The primary structure comprises 388 residues: Chorismate synthase (388 aa).

Residues R39 and R45 each contribute to the NADP(+) site. FMN is bound by residues 132–134, 251–252, G296, 311–315, and R337; these read RSS, NA, and KPIPT.

As to quaternary structure, homotetramer. FMNH2 is required as a cofactor.

It carries out the reaction 5-O-(1-carboxyvinyl)-3-phosphoshikimate = chorismate + phosphate. Its pathway is metabolic intermediate biosynthesis; chorismate biosynthesis; chorismate from D-erythrose 4-phosphate and phosphoenolpyruvate: step 7/7. Functionally, catalyzes the anti-1,4-elimination of the C-3 phosphate and the C-6 proR hydrogen from 5-enolpyruvylshikimate-3-phosphate (EPSP) to yield chorismate, which is the branch point compound that serves as the starting substrate for the three terminal pathways of aromatic amino acid biosynthesis. This reaction introduces a second double bond into the aromatic ring system. The sequence is that of Chorismate synthase from Staphylococcus aureus.